A 199-amino-acid polypeptide reads, in one-letter code: CASP-like protein 4C1 (199 aa).

Residues Met-1–Thr-35 lie on the Cytoplasmic side of the membrane. The chain crosses the membrane as a helical span at residues Met-36–Gly-56. At Thr-57–Arg-80 the chain is on the extracellular side. Residues Tyr-81–Val-101 form a helical membrane-spanning segment. Residues Tyr-102 to Asp-124 are Cytoplasmic-facing. Residues Gln-125–Leu-145 form a helical membrane-spanning segment. At Gln-146–Arg-169 the chain is on the extracellular side. A helical membrane pass occupies residues Val-170 to Gly-190. Topologically, residues Leu-191 to Pro-199 are cytoplasmic.

The protein belongs to the Casparian strip membrane proteins (CASP) family. In terms of assembly, homodimer and heterodimers.

The protein resides in the cell membrane. This Physcomitrium patens (Spreading-leaved earth moss) protein is CASP-like protein 4C1.